Reading from the N-terminus, the 723-residue chain is Transient receptor potential cation channel subfamily V member 5 (723 aa).

Topologically, residues 1 to 320 (MGAKTPWIQL…SLKWKKYGQP (320 aa)) are cytoplasmic. ANK repeat units follow at residues 38 to 68 (IWES…DFRQ), 72 to 101 (LGET…YLVT), 110 to 139 (VGQT…SASA), 156 to 185 (YGEH…DIRA), 189 to 222 (LGNT…GDHL), and 232 to 261 (QGLT…RIQW). Residues 321-341 (YFCLLGALYIFYMVCFTTCCV) form a helical membrane-spanning segment. Residues 342-378 (YRPLKFRDANRTHVRDNTIMEQKSLQEAYVTYQDKIR) are Extracellular-facing. Residues 379–401 (LVGELVTVIGAVIILLLEIPDIF) traverse the membrane as a helical segment. Residues 402–412 (RVGASRYFGQT) lie on the Extracellular side of the membrane. Residues 413–435 (VLGGPFHVIIITYASLVLLTMAM) traverse the membrane as a helical segment. Topologically, residues 436-441 (RLTNVN) are cytoplasmic. Residues 442 to 462 (GEVVPMSMALVLGWCSVMYFA) form a helical membrane-spanning segment. Over 463-485 (RGFQMLGPFTIMIQKMIFGDLLR) the chain is Extracellular. A helical membrane pass occupies residues 486-506 (FCWLMAMVILGFASAFYIIFQ). An intramembrane region (pore-forming) is located at residues 517–537 (SDYPTAMFSTFELFLTIIDGP). Asp535 is a Ca(2+) binding site. The chain crosses the membrane as a helical span at residues 550–570 (VTYATFAIIATLLMLNLFIAM). At 571-723 (MGDTHWRVAQ…EGDGEEIYQF (153 aa)) the chain is on the cytoplasmic side. The interval 591-595 (VATTV) is interaction with S100A10. The involved in Ca(2+)-dependent inactivation stretch occupies residues 643-646 (AFKS). The disordered stretch occupies residues 651–673 (EVQEQLSEKQPSGTETGTLARGS). A compositionally biased stretch (polar residues) spans 654–667 (EQLSEKQPSGTETG). A Phosphothreonine modification is found at Thr678. Phosphoserine is present on Ser682. The tract at residues 693–723 (RGWEILRRNTLGHLNLGLDPGEGDGEEIYQF) is involved in Ca(2+)-dependent inactivation.

It belongs to the transient receptor (TC 1.A.4) family. TrpV subfamily. TRPV5 sub-subfamily. Homotetramer and probably heterotetramer with TRPV6. Interacts with TRPV6. Interacts with S100A10 and probably with the ANAX2-S100A10 heterotetramer. The interaction with S100A10 is required for the trafficking to the plasma membrane. Interacts with calmodulin. Interacts with BSPRY, which results in its inactivation. Post-translationally, glycosylated. In terms of tissue distribution, detected in kidney cortex (at protein level).

The protein localises to the apical cell membrane. The catalysed reaction is Ca(2+)(in) = Ca(2+)(out). Activated by WNK3. Its function is as follows. Constitutively active calcium selective cation channel thought to be involved in Ca(2+) reabsorption in kidney and intestine. Required for normal Ca(2+) reabsorption in the kidney distal convoluted tubules. The channel is activated by low internal calcium level and the current exhibits an inward rectification. A Ca(2+)-dependent feedback regulation includes fast channel inactivation and slow current decay. Heteromeric assembly with TRPV6 seems to modify channel properties. TRPV5-TRPV6 heteromultimeric concatemers exhibit voltage-dependent gating. This Mus musculus (Mouse) protein is Transient receptor potential cation channel subfamily V member 5 (Trpv5).